We begin with the raw amino-acid sequence, 206 residues long: Ras-related protein RABG3f (206 aa).

15–23 lines the GTP pocket; sequence GDSGVGKTS. The Effector region signature appears at 37-45; the sequence is YKATIGADF. GTP is bound by residues 63 to 67, 125 to 128, and 158 to 159; these read DTAGQ, NKVD, and SA. Residues C204 and C206 are each lipidated (S-geranylgeranyl cysteine). C206 carries the cysteine methyl ester modification.

This sequence belongs to the small GTPase superfamily. Rab family. In terms of assembly, interacts with VPS35A.

The protein resides in the endosome membrane. It localises to the vacuole membrane. The protein localises to the prevacuolar compartment membrane. Regulated by guanine nucleotide exchange factors (GEFs) which promote the exchange of bound GDP for free GTP. Regulated by the MON1-CCZ1 complex which serves as a link between Rab5 and Rab7 protein families in PVCs and mediates PVC maturation. In terms of biological role, essential for trafficking from prevacuolar compartments to vacuoles. Involved in the trafficking of newly synthesized protein to vacuoles. Essential for plant growth. Participates in the recruitment of the core retromer components to the endosomal membrane by interacting with VPS35A. In Arabidopsis thaliana (Mouse-ear cress), this protein is Ras-related protein RABG3f (RABG3F).